A 180-amino-acid chain; its full sequence is MAELATIARPYAEALFKACAAQPGADLGSTVAWVDELAAIAADPQVRQLADNPKIESGQLFDLIAGVVRAPLSDAARNFLRVLIDNGRLEALPEVAAQFRALVNRQSGSSDAVVHSAFPIDAAALAELGASLEKRFGRKLNLSVQLDESLIGGVRVAVGDEVLDTSVKARLEQMKAALVA.

Belongs to the ATPase delta chain family. In terms of assembly, F-type ATPases have 2 components, F(1) - the catalytic core - and F(0) - the membrane proton channel. F(1) has five subunits: alpha(3), beta(3), gamma(1), delta(1), epsilon(1). F(0) has three main subunits: a(1), b(2) and c(10-14). The alpha and beta chains form an alternating ring which encloses part of the gamma chain. F(1) is attached to F(0) by a central stalk formed by the gamma and epsilon chains, while a peripheral stalk is formed by the delta and b chains.

Its subcellular location is the cell inner membrane. Its function is as follows. F(1)F(0) ATP synthase produces ATP from ADP in the presence of a proton or sodium gradient. F-type ATPases consist of two structural domains, F(1) containing the extramembraneous catalytic core and F(0) containing the membrane proton channel, linked together by a central stalk and a peripheral stalk. During catalysis, ATP synthesis in the catalytic domain of F(1) is coupled via a rotary mechanism of the central stalk subunits to proton translocation. This protein is part of the stalk that links CF(0) to CF(1). It either transmits conformational changes from CF(0) to CF(1) or is implicated in proton conduction. This Paracidovorax citrulli (strain AAC00-1) (Acidovorax citrulli) protein is ATP synthase subunit delta.